A 491-amino-acid polypeptide reads, in one-letter code: Spermatogenesis-defective protein 39 homolog (491 aa).

The residue at position 21 (Thr-21) is a Phosphothreonine. A compositionally biased stretch (polar residues) spans 72 to 81 (KETAGSSGST). Positions 72–101 (KETAGSSGSTPEGREQLKGRNSFYTQLPKP) are disordered. A Phosphothreonine modification is found at Thr-115. 3 positions are modified to phosphoserine: Ser-119, Ser-122, and Ser-128. The disordered stretch occupies residues 121–141 (QSLSDALSDTPAKSYAPELGR). The residue at position 130 (Thr-130) is a Phosphothreonine.

This sequence belongs to the SPE39 family. In terms of assembly, interacts with VPS33B. Associates with the homotypic fusion and vacuole protein sorting (HOPS) complex; impaired by VPS33B. Interacts with RAB11A.

The protein localises to the cytoplasm. It is found in the cytoplasmic vesicle. The protein resides in the early endosome. It localises to the recycling endosome. Its subcellular location is the late endosome. Functionally, proposed to be involved in endosomal maturation implicating in part VPS33B. In epithelial cells, the VPS33B:VIPAS39 complex may play a role in the apical RAB11A-dependent recycling pathway and in the maintenance of the apical-basolateral polarity. May play a role in lysosomal trafficking, probably via association with the core HOPS complex in a discrete population of endosomes; the functions seems to be independent of VPS33B. May play a role in vesicular trafficking during spermatogenesis. May be involved in direct or indirect transcriptional regulation of E-cadherin. The sequence is that of Spermatogenesis-defective protein 39 homolog (Vipas39) from Mus musculus (Mouse).